The chain runs to 1407 residues: DNA-directed RNA polymerase subunit beta' (1407 aa).

Positions 70, 72, 85, and 88 each coordinate Zn(2+). Mg(2+) contacts are provided by aspartate 460, aspartate 462, and aspartate 464. Residues cysteine 814, cysteine 888, cysteine 895, and cysteine 898 each contribute to the Zn(2+) site.

Belongs to the RNA polymerase beta' chain family. The RNAP catalytic core consists of 2 alpha, 1 beta, 1 beta' and 1 omega subunit. When a sigma factor is associated with the core the holoenzyme is formed, which can initiate transcription. It depends on Mg(2+) as a cofactor. The cofactor is Zn(2+).

It carries out the reaction RNA(n) + a ribonucleoside 5'-triphosphate = RNA(n+1) + diphosphate. Its function is as follows. DNA-dependent RNA polymerase catalyzes the transcription of DNA into RNA using the four ribonucleoside triphosphates as substrates. This is DNA-directed RNA polymerase subunit beta' from Buchnera aphidicola subsp. Acyrthosiphon pisum (strain APS) (Acyrthosiphon pisum symbiotic bacterium).